We begin with the raw amino-acid sequence, 219 residues long: VQ motif-containing protein 19 (219 aa).

The short motif at 47-56 is the VQ element; it reads FKQVVQMLTG. The tract at residues 52–94 is disordered; the sequence is QMLTGSSSPRSPDSPRPPTTPSGKGNFVIPPIKTAQPKKHSGN. A phosphoserine mark is found at serine 59, serine 65, serine 127, serine 131, serine 139, serine 141, and serine 152. Threonine 155 carries the post-translational modification Phosphothreonine. 2 disordered regions span residues 156–177 and 190–219; these read PLKQGTNGNEGDPFDKMSPLSE and HRSPISTPRDSEPQLLPLFPVTSPRLSPEM. Residues serine 192 and serine 195 each carry the phosphoserine modification. Phosphothreonine occurs at positions 196 and 211. A phosphoserine mark is found at serine 212 and serine 216.

Post-translationally, phosphorylated on serine and threonine residues by MPK6.

It localises to the nucleus. In terms of biological role, may modulate WRKY transcription factor activities. In Arabidopsis thaliana (Mouse-ear cress), this protein is VQ motif-containing protein 19.